The following is a 417-amino-acid chain: Carbohydrate sulfotransferase 8 (417 aa).

Residues 1–10 lie on the Cytoplasmic side of the membrane; that stretch reads MTPRLGTMRL. Residues 11–31 form a helical; Signal-anchor for type II membrane protein membrane-spanning segment; it reads ACMFSSILLFGAAGLLLFISL. Over 32-417 the chain is Lumenal; it reads QDPIELSPQQ…NYSKPFSDLY (386 aa). Positions 47 to 101 are disordered; the sequence is FSIRPQQPQHDSHLRISTEKGTRDSPSGSPRGLQLQAPDQPRPHPKAAGSPLRLR. Residues 56–69 show a composition bias toward basic and acidic residues; that stretch reads HDSHLRISTEKGTR. 2 N-linked (GlcNAc...) asparagine glycosylation sites follow: N121 and N122. Residues 191–197 and 251–259 contribute to the 3'-phosphoadenylyl sulfate site; these read PKAGCSN and REPFERLVS. Residues N287, N360, and N408 are each glycosylated (N-linked (GlcNAc...) asparagine).

Belongs to the sulfotransferase 2 family. Strongly expressed in brain. Weakly expressed in lung and kidney. Weakly expressed in pituitary.

Its subcellular location is the golgi apparatus membrane. Functionally, catalyzes the transfer of sulfate to position 4 of non-reducing N-acetylgalactosamine (GalNAc) residues in both N-glycans and O-glycans. Required for biosynthesis of glycoprotein hormones lutropin and thyrotropin, by mediating sulfation of their carbohydrate structures. Only active against terminal GalNAcbeta1,GalNAcbeta. Not active toward chondroitin. The protein is Carbohydrate sulfotransferase 8 (Chst8) of Mus musculus (Mouse).